The sequence spans 364 residues: Biotin synthase (364 aa).

A Radical SAM core domain is found at C68–R303. The [4Fe-4S] cluster site is built by C86, C90, and C93. Residues C131, C168, C228, and R298 each coordinate [2Fe-2S] cluster.

Belongs to the radical SAM superfamily. Biotin synthase family. As to quaternary structure, homodimer. [4Fe-4S] cluster is required as a cofactor. Requires [2Fe-2S] cluster as cofactor.

The catalysed reaction is (4R,5S)-dethiobiotin + (sulfur carrier)-SH + 2 reduced [2Fe-2S]-[ferredoxin] + 2 S-adenosyl-L-methionine = (sulfur carrier)-H + biotin + 2 5'-deoxyadenosine + 2 L-methionine + 2 oxidized [2Fe-2S]-[ferredoxin]. It participates in cofactor biosynthesis; biotin biosynthesis; biotin from 7,8-diaminononanoate: step 2/2. Functionally, catalyzes the conversion of dethiobiotin (DTB) to biotin by the insertion of a sulfur atom into dethiobiotin via a radical-based mechanism. The chain is Biotin synthase from Microcystis aeruginosa (strain NIES-843 / IAM M-2473).